A 262-amino-acid polypeptide reads, in one-letter code: Adenosine deaminase RL5 (262 aa).

12 residues coordinate Cu cation: Asn36, Tyr40, Met68, His73, Cys75, Asn114, Cys118, His135, Cys172, Cys175, Cys234, and Cys237.

It belongs to the purine nucleoside phosphorylase YfiH/LACC1 family. In terms of assembly, homodimer. Requires Cu cation as cofactor.

It carries out the reaction adenosine + phosphate = alpha-D-ribose 1-phosphate + adenine. It catalyses the reaction S-methyl-5'-thioadenosine + phosphate = 5-(methylsulfanyl)-alpha-D-ribose 1-phosphate + adenine. The enzyme catalyses inosine + phosphate = alpha-D-ribose 1-phosphate + hypoxanthine. The catalysed reaction is adenosine + H2O + H(+) = inosine + NH4(+). Its function is as follows. Purine nucleoside enzyme that catalyzes the phosphorolysis of adenosine and inosine nucleosides, yielding D-ribose 1-phosphate and the respective free bases, adenine and hypoxanthine. Also catalyzes the phosphorolysis of S-methyl-5'-thioadenosine into adenine and S-methyl-5-thio-alpha-D-ribose 1-phosphate. Also has adenosine deaminase activity. Also acts as a multicopper oxidase able to oxidize a wide variety of polyphenols and related compounds in vitro. Displays substrate preference as follows: syringaldazine &gt; 2,6-dimethoxyphenol &gt; veratryl alcohol &gt; guaiacol &gt; tetramethylbenzidine &gt; 4-methoxybenzyl alcohol &gt; 2,2'-azino-bis(3-ethylbenzthiazoline-6-sulfonic acid) (ABTS) &gt;&gt; phenol red &gt; 1-hydroxybenzotriazole. Cannot use 3,4-dimetoxybenzyl alcohol and violuric acid as substrates. As this enzyme is derived from a rumen microbial community, it may have a role in the digestion of complex plant materials such as ryegrass lignin. The chain is Adenosine deaminase RL5 from Unknown prokaryotic organism.